The chain runs to 355 residues: Type II methyltransferase M.MthZI (355 aa).

Belongs to the N(4)/N(6)-methyltransferase family. N(4) subfamily.

The enzyme catalyses a 2'-deoxycytidine in DNA + S-adenosyl-L-methionine = an N(4)-methyl-2'-deoxycytidine in DNA + S-adenosyl-L-homocysteine + H(+). In terms of biological role, a beta subtype methylase that recognizes the double-stranded sequence 5'-CTAG-3', methylates C-1 on both strands, and protects the DNA from cleavage by the MthZI endonuclease. This is Type II methyltransferase M.MthZI from Methanothermobacter thermautotrophicus (Methanobacterium thermoformicicum).